Consider the following 336-residue polypeptide: N6-methyladenosine RNA methyltransferase MTA1 (336 aa).

The interval 61–83 (LISSEPPHLPFKTPEPKAGSGGL) is disordered.

The protein belongs to the MT-A70-like family.

It catalyses the reaction an adenosine in mRNA + S-adenosyl-L-methionine = an N(6)-methyladenosine in mRNA + S-adenosyl-L-homocysteine + H(+). Its function is as follows. N6-methyladenosine RNA methyltransferase that plays a crucial role in fungal phenotypic traits, virulence, and stress tolerance. Mediates the methylation of mRNAs to produce N6-methyladenosine (m6A)-containing mRNAs. M6A is a modification present at internal sites of mRNAs and some non-coding RNAs and plays a role in mRNA stability and processing. Mediates specifically acid phosphatase APHA mRNA stability through a YTHDF1-dependent m6A modification of the A1306, A1341, and A1666 key methylation modification sites. Also mediates the stability of the transcription factor ZAP1 mRNA via modification of residue A1935 localized in the 3'UTR. The chain is N6-methyladenosine RNA methyltransferase MTA1 from Cryphonectria parasitica (strain ATCC 38755 / EP155).